Here is a 514-residue protein sequence, read N- to C-terminus: M-phase inducer phosphatase 1 (514 aa).

Positions 73-83 (MGSSESTDSGF) match the Phosphodegron motif. Ser75 carries the post-translational modification Phosphoserine; by CHEK1. Phosphoserine; by NEK11 is present on residues Ser78, Ser81, and Ser87. Ser106 carries the post-translational modification Phosphoserine. Ser123 bears the Phosphoserine; by CHEK1 and CHEK2 mark. A KEN box motif is present at residues 140–142 (KEN). Ser172 is subject to Phosphoserine; by CHEK1. Residues 256–308 (PCGSSTRAVLKRADRSHEEPPRGTKRRKSVPSPVKAKADVPEPAQLPSQSLSL) form a disordered region. The span at 266–277 (KRADRSHEEPPR) shows a compositional bias: basic and acidic residues. Ser271 and Ser284 each carry phosphoserine; by CHEK1 and CHEK2. The residue at position 311 (Ser311) is a Phosphoserine. The 107-residue stretch at 366–472 (LIKEFVIIDC…FFLKCQSHCE (107 aa)) folds into the Rhodanese domain. Cys421 is an active-site residue. Thr497 bears the Phosphothreonine; by CHEK1 mark. Ser503 and Ser509 each carry phosphoserine; by PLK3.

Belongs to the MPI phosphatase family. As to quaternary structure, interacts with CCNB1/cyclin B1. Interacts with YWHAE/14-3-3 epsilon when phosphorylated. Interacts with CUL1 specifically when CUL1 is neddylated and active. Interacts with BTRC/BTRCP1 and FBXW11/BTRCP2. Interactions with CUL1, BTRC and FBXW11 are enhanced upon DNA damage. Interacts with CHEK2; mediates CDC25A phosphorylation and degradation in response to infrared-induced DNA damages. Interacts with HSP90AB1; prevents heat shock-mediated CDC25A degradation and contributes to cell cycle progression. In terms of processing, phosphorylated by CHEK1 on Ser-75, Ser-123, Ser-172, Ser-271, Ser-284 and Thr-497 during checkpoint mediated cell cycle arrest. Also phosphorylated by CHEK2 on Ser-123, Ser-271, and Ser-284 during checkpoint mediated cell cycle arrest. Phosphorylation on Ser-172 and Thr-497 creates binding sites for YWHAE/14-3-3 epsilon which inhibits CDC25A. Phosphorylation on Ser-75, Ser-123, Ser-172, Ser-271 and Ser-284 may also promote ubiquitin-dependent proteolysis of CDC25A by the SCF complex. Phosphorylation of CDC25A at Ser-75 by CHEK1 primes it for subsequent phosphorylation at Ser-75, Ser-81 and Ser-87 by NEK11. Phosphorylation by NEK11 is required for BTRC-mediated polyubiquitination and degradation. Phosphorylation by PIM1 leads to an increase in phosphatase activity. Phosphorylated by PLK3 following DNA damage, leading to promote its ubiquitination and degradation. Post-translationally, ubiquitinated by the anaphase promoting complex/cyclosome (APC/C) ubiquitin ligase complex that contains FZR1/CDH1 during G1 phase leading to its degradation by the proteasome. Ubiquitinated by a SCF complex containing BTRC and FBXW11 during S phase leading to its degradation by the proteasome. Deubiquitination by USP17L2/DUB3 leads to its stabilization. As to expression, ubiquitously expressed in most developing tissue. High levels in the testis and lower levels in the ovary, particularly in germ cells. Lower levels also in kidney, liver, heart and muscle.

It carries out the reaction O-phospho-L-tyrosyl-[protein] + H2O = L-tyrosyl-[protein] + phosphate. Its activity is regulated as follows. Stimulated by B-type cyclins. Stimulated by PIM1-mediated phosphorylation. In terms of biological role, tyrosine protein phosphatase which functions as a dosage-dependent inducer of mitotic progression. Directly dephosphorylates CDK1 and stimulates its kinase activity. Also dephosphorylates CDK2 in complex with cyclin-E, in vitro. The chain is M-phase inducer phosphatase 1 (Cdc25a) from Mus musculus (Mouse).